Reading from the N-terminus, the 243-residue chain is MRKPVIAGNWKMHMTCAQAREYTAMFLPLIEATPNDRHVVIAPPFTAISSMAESVGGTRLELSSQNVHWEDDGAYTAEVSPTMLLEHQVRYAIVGHSEPRKYFSESDEQINRRARSAQAHGLIPIVCVGESDEQRERGEAERVIRRQVEQGLEDTDPDKLVVAYEPIWAIGTGKTCEASEANRICGLIRRWVGASELIIQYGGSVKPGNIDELMAMSDIDGVLVGGASLDPESFARIANYQTS.

9 to 11 lines the substrate pocket; the sequence is NWK. His-96 serves as the catalytic Electrophile. Glu-165 acts as the Proton acceptor in catalysis. Residues Gly-171, Ser-204, and 225 to 226 each bind substrate; that span reads GG.

This sequence belongs to the triosephosphate isomerase family. In terms of assembly, homodimer.

The protein localises to the cytoplasm. The enzyme catalyses D-glyceraldehyde 3-phosphate = dihydroxyacetone phosphate. The protein operates within carbohydrate biosynthesis; gluconeogenesis. Its pathway is carbohydrate degradation; glycolysis; D-glyceraldehyde 3-phosphate from glycerone phosphate: step 1/1. Involved in the gluconeogenesis. Catalyzes stereospecifically the conversion of dihydroxyacetone phosphate (DHAP) to D-glyceraldehyde-3-phosphate (G3P). The chain is Triosephosphate isomerase from Prochlorococcus marinus (strain MIT 9313).